The primary structure comprises 137 residues: Large ribosomal subunit protein uL16c (137 aa).

The protein belongs to the universal ribosomal protein uL16 family. Part of the 50S ribosomal subunit.

It is found in the plastid. The protein resides in the chloroplast. The polypeptide is Large ribosomal subunit protein uL16c (Trieres chinensis (Marine centric diatom)).